The sequence spans 156 residues: Small ribosomal subunit protein uS7c (156 aa).

This sequence belongs to the universal ribosomal protein uS7 family. Part of the 30S ribosomal subunit.

It is found in the plastid. The protein localises to the cyanelle. In terms of biological role, one of the primary rRNA binding proteins, it binds directly to 16S rRNA where it nucleates assembly of the head domain of the 30S subunit. The polypeptide is Small ribosomal subunit protein uS7c (rps7) (Cyanophora paradoxa).